Here is a 207-residue protein sequence, read N- to C-terminus: MSTPHWFDQGSLVLASNNKGKVAEFEKLFEQLKLPVEIIPQGRLNIPDAIEDGLSFIENAIIKARHASKISGKPAMADDSGICVPVLGGAPGIYSARYAGEHGDDAANNAKLLNDLLPFRKNGEVIEGMFVCVLALVTHAEDPLPQIFQGIWHGEILEAPRGENGFGYDPLFWLPELQVSSAELSKEEKNKISHRGQAMQLFRESLV.

16–21 (SNNKGK) is a binding site for substrate. Aspartate 79 functions as the Proton acceptor in the catalytic mechanism. Aspartate 79 lines the Mg(2+) pocket. Substrate contacts are provided by residues serine 80, 166–169 (FGYD), lysine 189, and 194–195 (HR).

Belongs to the HAM1 NTPase family. As to quaternary structure, homodimer. Mg(2+) is required as a cofactor.

The catalysed reaction is XTP + H2O = XMP + diphosphate + H(+). The enzyme catalyses dITP + H2O = dIMP + diphosphate + H(+). It carries out the reaction ITP + H2O = IMP + diphosphate + H(+). Pyrophosphatase that catalyzes the hydrolysis of nucleoside triphosphates to their monophosphate derivatives, with a high preference for the non-canonical purine nucleotides XTP (xanthosine triphosphate), dITP (deoxyinosine triphosphate) and ITP. Seems to function as a house-cleaning enzyme that removes non-canonical purine nucleotides from the nucleotide pool, thus preventing their incorporation into DNA/RNA and avoiding chromosomal lesions. The polypeptide is dITP/XTP pyrophosphatase (Acinetobacter baumannii (strain ATCC 17978 / DSM 105126 / CIP 53.77 / LMG 1025 / NCDC KC755 / 5377)).